Consider the following 318-residue polypeptide: NADH-ubiquinone oxidoreductase chain 1 (318 aa).

A run of 8 helical transmembrane segments spans residues F2–L22, M70–P90, L102–A122, A147–I167, Y171–A191, L222–F242, E253–I273, and L294–I314.

The protein belongs to the complex I subunit 1 family.

Its subcellular location is the mitochondrion inner membrane. It catalyses the reaction a ubiquinone + NADH + 5 H(+)(in) = a ubiquinol + NAD(+) + 4 H(+)(out). Core subunit of the mitochondrial membrane respiratory chain NADH dehydrogenase (Complex I) that is believed to belong to the minimal assembly required for catalysis. Complex I functions in the transfer of electrons from NADH to the respiratory chain. The immediate electron acceptor for the enzyme is believed to be ubiquinone. In Diaemus youngi (White-winged vampire bat), this protein is NADH-ubiquinone oxidoreductase chain 1 (MT-ND1).